Consider the following 193-residue polypeptide: dCTP deaminase (193 aa).

Residues 110–115 (RSSLAR), Asp128, 136–138 (VLE), Tyr171, Lys178, and Gln182 each bind dCTP. Residue Glu138 is the Proton donor/acceptor of the active site. The segment at 173 to 193 (KRKNAKYKDQQDAVASRISQD) is disordered.

The protein belongs to the dCTP deaminase family. As to quaternary structure, homotrimer.

It carries out the reaction dCTP + H2O + H(+) = dUTP + NH4(+). Its pathway is pyrimidine metabolism; dUMP biosynthesis; dUMP from dCTP (dUTP route): step 1/2. Functionally, catalyzes the deamination of dCTP to dUTP. The chain is dCTP deaminase from Shewanella sp. (strain ANA-3).